The chain runs to 292 residues: Elongation factor Ts (292 aa).

Residues 79 to 82 (TDFV) form an involved in Mg(2+) ion dislocation from EF-Tu region.

Belongs to the EF-Ts family.

Its subcellular location is the cytoplasm. Functionally, associates with the EF-Tu.GDP complex and induces the exchange of GDP to GTP. It remains bound to the aminoacyl-tRNA.EF-Tu.GTP complex up to the GTP hydrolysis stage on the ribosome. This is Elongation factor Ts from Xanthomonas euvesicatoria pv. vesicatoria (strain 85-10) (Xanthomonas campestris pv. vesicatoria).